The following is a 405-amino-acid chain: Sialic acid transporter NanX (405 aa).

Topologically, residues methionine 1 to alanine 20 are cytoplasmic. The helical transmembrane segment at tryptophan 21–isoleucine 41 threads the bilayer. Residues lysine 42 to threonine 53 are Periplasmic-facing. Residues leucine 54 to alanine 74 traverse the membrane as a helical segment. Topologically, residues aspartate 75 to lysine 80 are cytoplasmic. A helical transmembrane segment spans residues proline 81–threonine 101. A topological domain (periplasmic) is located at residue asparagine 102. Residues leucine 103–cysteine 123 form a helical membrane-spanning segment. Residues alanine 124–lysine 139 are Cytoplasmic-facing. A helical membrane pass occupies residues alanine 140–proline 160. Residues glutamine 161–glutamate 164 are Periplasmic-facing. The helical transmembrane segment at valine 165–isoleucine 185 threads the bilayer. At arginine 186–histidine 214 the chain is on the cytoplasmic side. Residues leucine 215–isoleucine 235 form a helical membrane-spanning segment. At asparagine 236 to threonine 250 the chain is on the periplasmic side. Residues valine 251–phenylalanine 271 traverse the membrane as a helical segment. Over glycine 272–lysine 282 the chain is Cytoplasmic. Residues alanine 283–valine 303 form a helical membrane-spanning segment. The Periplasmic segment spans residues lysine 304–serine 307. A helical transmembrane segment spans residues leucine 308–proline 328. The Cytoplasmic segment spans residues lysine 329–threonine 344. A helical transmembrane segment spans residues glycine 345 to isoleucine 365. Topologically, residues serine 366–leucine 371 are periplasmic. A helical transmembrane segment spans residues glycine 372 to phenylalanine 392. Residues aspartate 393–lysine 405 are Cytoplasmic-facing.

Belongs to the major facilitator superfamily. Sugar transporter (TC 2.A.1.1) family.

It is found in the cell inner membrane. Probably transports across the inner membrane the two dehydrated forms of N-acetylneuraminate (Neu5Ac), 2,7-anhydro-N-acetylneuraminate (2,7-AN) and 2-deoxy-2,3-didehydro-N-acetylneuraminate (2,3-EN). This is Sialic acid transporter NanX from Escherichia coli (strain K12).